Here is a 549-residue protein sequence, read N- to C-terminus: MALKARALYSFQGENKEEINILENEELHLFSDVSLDGWLQGTNSRGQTGLFPASYVEILRPRSGSVQVDYSGHTQGYTDSPHQGSYDDDEEDDDDWDDWDDGQTVVDEPSGSNGVSRSQLQHHHHYPRPEYTHRPRPALERQDSIASGKRGSVVGRNLNRFSSFVRSGVEAFVLGDVPQFGGVSESHAIEMGPKGPQWKANPRPFSCSVEEPTKQTKFKGIKSYISYRLTPDPCNSPVYRRYKHFDWLYNRLLHKFTVISVPHLPEKQATGRFEEDFIQKRKRRLVLWMDHMTSHPVLSQYDGFQHFLSCQDEKQWKAGKRRAERDELVGASFLLTLQLPTEHQDLQDVEERVDVFKAFSKKMDENVLQLSSVVSELARKHLGGFRKEFQRLGAALQGLSHSFQLDPPYSSEPLVGAISHTGRTYEAVGEMFAEQPKNDQFRFLDTLSLYQGLLSNFPDIIHLQKGAFAKVKESQRMSDEGRMEQDEADGIRKRCRVVGFALQAEINHFHQRRLQDFKQAIQHYLKEQILFYRRVSQELEKTLHMYDDL.

An SH3 domain is found at 1–61 (MALKARALYS…PASYVEILRP (61 aa)). Polar residues predominate over residues 66 to 83 (VQVDYSGHTQGYTDSPHQ). Residues 66-137 (VQVDYSGHTQ…RPEYTHRPRP (72 aa)) are disordered. The segment covering 86-101 (YDDDEEDDDDWDDWDD) has biased composition (acidic residues). The span at 110-119 (SGSNGVSRSQ) shows a compositional bias: polar residues. Residues 127 to 137 (PRPEYTHRPRP) are compositionally biased toward basic and acidic residues. Residues 205 to 315 (FSCSVEEPTK…HFLSCQDEKQ (111 aa)) form the PX domain. In terms of domain architecture, BAR spans 346 to 549 (LQDVEERVDV…EKTLHMYDDL (204 aa)).

It belongs to the sorting nexin family.

It is found in the cytoplasm. Its subcellular location is the cytosol. The protein localises to the membrane. It localises to the cytoplasmic vesicle membrane. Functionally, plays a role in the reorganization of the cytoskeleton, endocytosis and cellular vesicle trafficking, both during interphase and at the end of mitotic cell divisions. Required for efficient progress through mitosis and cytokinesis. Required for normal formation of the cleavage furrow at the end of mitosis. Modulates endocytosis of cell-surface proteins. Promotes membrane tubulation (in vitro). May promote the formation of macropinosomes. In Xenopus tropicalis (Western clawed frog), this protein is Sorting nexin-33 (snx33).